Consider the following 413-residue polypeptide: Serine hydroxymethyltransferase (413 aa).

(6S)-5,6,7,8-tetrahydrofolate-binding positions include leucine 117 and 121–123; that span reads GHL. Lysine 226 is subject to N6-(pyridoxal phosphate)lysine. Residue 349 to 351 coordinates (6S)-5,6,7,8-tetrahydrofolate; sequence SPF.

This sequence belongs to the SHMT family. Homodimer. Requires pyridoxal 5'-phosphate as cofactor.

The protein resides in the cytoplasm. The catalysed reaction is (6R)-5,10-methylene-5,6,7,8-tetrahydrofolate + glycine + H2O = (6S)-5,6,7,8-tetrahydrofolate + L-serine. It participates in one-carbon metabolism; tetrahydrofolate interconversion. It functions in the pathway amino-acid biosynthesis; glycine biosynthesis; glycine from L-serine: step 1/1. In terms of biological role, catalyzes the reversible interconversion of serine and glycine with tetrahydrofolate (THF) serving as the one-carbon carrier. This reaction serves as the major source of one-carbon groups required for the biosynthesis of purines, thymidylate, methionine, and other important biomolecules. Also exhibits THF-independent aldolase activity toward beta-hydroxyamino acids, producing glycine and aldehydes, via a retro-aldol mechanism. The protein is Serine hydroxymethyltransferase of Listeria innocua serovar 6a (strain ATCC BAA-680 / CLIP 11262).